A 748-amino-acid polypeptide reads, in one-letter code: Elongation factor G, mitochondrial (748 aa).

The N-terminal 14 residues, 1–14 (MTISSFLRVRHSLA), are a transit peptide targeting the mitochondrion. A tr-type G domain is found at 40-318 (ERIRNIGISA…VLNYLPHPGE (279 aa)). Residues 49-56 (AHIDSGKT), 116-120 (DTPGH), and 170-173 (NKLD) contribute to the GTP site.

This sequence belongs to the TRAFAC class translation factor GTPase superfamily. Classic translation factor GTPase family. EF-G/EF-2 subfamily.

It localises to the mitochondrion. It participates in protein biosynthesis; polypeptide chain elongation. In terms of biological role, mitochondrial GTPase that catalyzes the GTP-dependent ribosomal translocation step during translation elongation. During this step, the ribosome changes from the pre-translocational (PRE) to the post-translocational (POST) state as the newly formed A-site-bound peptidyl-tRNA and P-site-bound deacylated tRNA move to the P and E sites, respectively. Catalyzes the coordinated movement of the two tRNA molecules, the mRNA and conformational changes in the ribosome. This Aedes aegypti (Yellowfever mosquito) protein is Elongation factor G, mitochondrial.